The chain runs to 583 residues: 2-succinyl-5-enolpyruvyl-6-hydroxy-3-cyclohexene-1-carboxylate synthase (583 aa).

Belongs to the TPP enzyme family. MenD subfamily. As to quaternary structure, homodimer. It depends on Mg(2+) as a cofactor. Mn(2+) is required as a cofactor. Requires thiamine diphosphate as cofactor.

The enzyme catalyses isochorismate + 2-oxoglutarate + H(+) = 5-enolpyruvoyl-6-hydroxy-2-succinyl-cyclohex-3-ene-1-carboxylate + CO2. The protein operates within quinol/quinone metabolism; 1,4-dihydroxy-2-naphthoate biosynthesis; 1,4-dihydroxy-2-naphthoate from chorismate: step 2/7. It functions in the pathway quinol/quinone metabolism; menaquinone biosynthesis. Its function is as follows. Catalyzes the thiamine diphosphate-dependent decarboxylation of 2-oxoglutarate and the subsequent addition of the resulting succinic semialdehyde-thiamine pyrophosphate anion to isochorismate to yield 2-succinyl-5-enolpyruvyl-6-hydroxy-3-cyclohexene-1-carboxylate (SEPHCHC). This is 2-succinyl-5-enolpyruvyl-6-hydroxy-3-cyclohexene-1-carboxylate synthase from Chlorobium chlorochromatii (strain CaD3).